The chain runs to 167 residues: Small ribosomal subunit protein uS5 (167 aa).

An S5 DRBM domain is found at 12–75 (LREKLITINR…ERARGGMRTV (64 aa)).

Belongs to the universal ribosomal protein uS5 family. As to quaternary structure, part of the 30S ribosomal subunit. Contacts proteins S4 and S8.

With S4 and S12 plays an important role in translational accuracy. Functionally, located at the back of the 30S subunit body where it stabilizes the conformation of the head with respect to the body. This chain is Small ribosomal subunit protein uS5, found in Halorhodospira halophila (strain DSM 244 / SL1) (Ectothiorhodospira halophila (strain DSM 244 / SL1)).